Here is a 261-residue protein sequence, read N- to C-terminus: Probable 6-phosphogluconolactonase 4 (261 aa).

It belongs to the glucosamine/galactosamine-6-phosphate isomerase family. 6-phosphogluconolactonase subfamily.

It localises to the cytoplasm. The protein localises to the cytosol. It carries out the reaction 6-phospho-D-glucono-1,5-lactone + H2O = 6-phospho-D-gluconate + H(+). It participates in carbohydrate degradation; pentose phosphate pathway; D-ribulose 5-phosphate from D-glucose 6-phosphate (oxidative stage): step 2/3. Catalyzes the hydrolysis of 6-phosphogluconolactone to 6-phosphogluconate. The polypeptide is Probable 6-phosphogluconolactonase 4 (Arabidopsis thaliana (Mouse-ear cress)).